We begin with the raw amino-acid sequence, 196 residues long: Probable malonic semialdehyde reductase RutE (196 aa).

Belongs to the nitroreductase family. HadB/RutE subfamily. It depends on FMN as a cofactor.

It carries out the reaction 3-hydroxypropanoate + NADP(+) = 3-oxopropanoate + NADPH + H(+). May reduce toxic product malonic semialdehyde to 3-hydroxypropionic acid, which is excreted. This Yersinia enterocolitica serotype O:8 / biotype 1B (strain NCTC 13174 / 8081) protein is Probable malonic semialdehyde reductase RutE.